Here is a 759-residue protein sequence, read N- to C-terminus: Tripartite motif-containing protein 46 (759 aa).

The tract at residues 1–166 (MAEGEDMQTF…VERYRQSVSV (166 aa)) is required for proximal axon localization, axon formation and migration. The RING-type 1; degenerate zinc-finger motif lies at 33–59 (CPVCQEMYKQPLVLPCTHNVCQACARE). The disordered stretch occupies residues 67–98 (IGHGGDPSSEPTSPASTPSTRSPRLSRRTLPK). Over residues 73–89 (PSSEPTSPASTPSTRSP) the composition is skewed to low complexity. The segment at 172 to 231 (CQLCKPPPLEATKGCSECRATFCNECFKLFHPWGTQKAQHEPTLPTLSFRPKGLMCPDHK) adopts an RING-type 2; degenerate zinc-finger fold. The B box-type zinc finger occupies 222–263 (PKGLMCPDHKEEVTHYCKTCQRLVCQLCRVRRTHSGHKITPV). Zn(2+) is bound by residues cysteine 227, histidine 230, cysteine 249, and histidine 255. Residues 294–400 (ELEETIRHTE…RATEALQTFR (107 aa)) are a coiled coil. Serine 330 is modified (phosphoserine). The COS domain maps to 370–427 (LKETDQPCFVQAAKQLHNRIARATEALQTFRPAASSSFRHCQLDVGREMKLLTELNFL). Residues 411-429 (QLDVGREMKLLTELNFLRV) form a required for microtubule association, proximal axon localization and axon formation region. In terms of domain architecture, Fibronectin type-III spans 429 to 528 (VPEAPVIDTQ…EDVHLHTPPA (100 aa)). A B30.2/SPRY domain is found at 513-747 (GYGEYSEDVH…LQEPVGTKPE (235 aa)). Phosphoserine is present on serine 627.

Belongs to the TRIM/RBCC family. Interacts with TUBB3 and TUBA4A. As to expression, expressed in primary hippocampal and cortical neurons.

Its subcellular location is the cell projection. The protein localises to the axon. It localises to the cytoplasm. The protein resides in the cytoskeleton. In terms of biological role, microtubule-associated protein that is involved in the formation of parallel microtubule bundles linked by cross-bridges in the proximal axon. Required for the uniform orientation and maintenance of the parallel microtubule fascicles, which are important for efficient cargo delivery and trafficking in axons. Thereby also required for proper axon specification, the establishment of neuronal polarity and proper neuronal migration. This Rattus norvegicus (Rat) protein is Tripartite motif-containing protein 46.